The primary structure comprises 185 residues: Ribosome-recycling factor (185 aa).

This sequence belongs to the RRF family.

Its subcellular location is the cytoplasm. In terms of biological role, responsible for the release of ribosomes from messenger RNA at the termination of protein biosynthesis. May increase the efficiency of translation by recycling ribosomes from one round of translation to another. In Vesicomyosocius okutanii subsp. Calyptogena okutanii (strain HA), this protein is Ribosome-recycling factor.